Reading from the N-terminus, the 122-residue chain is Large ribosomal subunit protein eL22B (122 aa).

Belongs to the eukaryotic ribosomal protein eL22 family. As to quaternary structure, component of the large ribosomal subunit (LSU). Mature yeast ribosomes consist of a small (40S) and a large (60S) subunit. The 40S small subunit contains 1 molecule of ribosomal RNA (18S rRNA) and 33 different proteins (encoded by 57 genes). The large 60S subunit contains 3 rRNA molecules (25S, 5.8S and 5S rRNA) and 46 different proteins (encoded by 81 genes).

Its subcellular location is the cytoplasm. Its function is as follows. Component of the ribosome, a large ribonucleoprotein complex responsible for the synthesis of proteins in the cell. The small ribosomal subunit (SSU) binds messenger RNAs (mRNAs) and translates the encoded message by selecting cognate aminoacyl-transfer RNA (tRNA) molecules. The large subunit (LSU) contains the ribosomal catalytic site termed the peptidyl transferase center (PTC), which catalyzes the formation of peptide bonds, thereby polymerizing the amino acids delivered by tRNAs into a polypeptide chain. The nascent polypeptides leave the ribosome through a tunnel in the LSU and interact with protein factors that function in enzymatic processing, targeting, and the membrane insertion of nascent chains at the exit of the ribosomal tunnel. In Saccharomyces cerevisiae (strain ATCC 204508 / S288c) (Baker's yeast), this protein is Large ribosomal subunit protein eL22B.